The sequence spans 311 residues: 4-hydroxy-tetrahydrodipicolinate synthase (311 aa).

Thr51 provides a ligand contact to pyruvate. The active-site Proton donor/acceptor is the Tyr140. Catalysis depends on Lys168, which acts as the Schiff-base intermediate with substrate. Ile209 is a binding site for pyruvate.

Belongs to the DapA family. Homotetramer; dimer of dimers.

The protein localises to the cytoplasm. The catalysed reaction is L-aspartate 4-semialdehyde + pyruvate = (2S,4S)-4-hydroxy-2,3,4,5-tetrahydrodipicolinate + H2O + H(+). It participates in amino-acid biosynthesis; L-lysine biosynthesis via DAP pathway; (S)-tetrahydrodipicolinate from L-aspartate: step 3/4. Its function is as follows. Catalyzes the condensation of (S)-aspartate-beta-semialdehyde [(S)-ASA] and pyruvate to 4-hydroxy-tetrahydrodipicolinate (HTPA). The chain is 4-hydroxy-tetrahydrodipicolinate synthase from Streptococcus suis (strain 98HAH33).